Here is a 427-residue protein sequence, read N- to C-terminus: Glutamate-1-semialdehyde 2,1-aminomutase (427 aa).

N6-(pyridoxal phosphate)lysine is present on Lys267.

This sequence belongs to the class-III pyridoxal-phosphate-dependent aminotransferase family. HemL subfamily. In terms of assembly, homodimer. Requires pyridoxal 5'-phosphate as cofactor.

It localises to the cytoplasm. The enzyme catalyses (S)-4-amino-5-oxopentanoate = 5-aminolevulinate. The protein operates within porphyrin-containing compound metabolism; protoporphyrin-IX biosynthesis; 5-aminolevulinate from L-glutamyl-tRNA(Glu): step 2/2. The sequence is that of Glutamate-1-semialdehyde 2,1-aminomutase from Citrifermentans bemidjiense (strain ATCC BAA-1014 / DSM 16622 / JCM 12645 / Bem) (Geobacter bemidjiensis).